A 183-amino-acid polypeptide reads, in one-letter code: CASP-like protein UU1 (183 aa).

Over 1 to 33 (MEESQQQSTKFDAPPSPYVPSRVYLAQIYWKKP) the chain is Cytoplasmic. The chain crosses the membrane as a helical span at residues 34–54 (AIVVLRVLQFVFSLIAFSVMA). The Extracellular segment spans residues 55 to 72 (DLLHDVQGSIKSLSYTVA). A helical membrane pass occupies residues 73-93 (IGVLACAYALAQLSFSLWCVI). Residues 94 to 118 (RGATSSSGVTPLYQYATFICDQMST) lie on the Cytoplasmic side of the membrane. A helical transmembrane segment spans residues 119–139 (YFLISAASATATLIDVSGVCG). The Extracellular segment spans residues 140–156 (SNGSGTNLCSRSTASVT). N-linked (GlcNAc...) asparagine glycosylation occurs at asparagine 141. The chain crosses the membrane as a helical span at residues 157-177 (FAFLAFLAFSASSVLTGYYLV). The Cytoplasmic portion of the chain corresponds to 178-183 (KCILKA).

This sequence belongs to the Casparian strip membrane proteins (CASP) family. In terms of assembly, homodimer and heterodimers.

The protein localises to the cell membrane. The sequence is that of CASP-like protein UU1 from Selaginella moellendorffii (Spikemoss).